The chain runs to 208 residues: Protein-L-isoaspartate O-methyltransferase (208 aa).

Ser59 is an active-site residue.

Belongs to the methyltransferase superfamily. L-isoaspartyl/D-aspartyl protein methyltransferase family.

The protein localises to the cytoplasm. It catalyses the reaction [protein]-L-isoaspartate + S-adenosyl-L-methionine = [protein]-L-isoaspartate alpha-methyl ester + S-adenosyl-L-homocysteine. Its function is as follows. Catalyzes the methyl esterification of L-isoaspartyl residues in peptides and proteins that result from spontaneous decomposition of normal L-aspartyl and L-asparaginyl residues. It plays a role in the repair and/or degradation of damaged proteins. In Aliivibrio fischeri (strain ATCC 700601 / ES114) (Vibrio fischeri), this protein is Protein-L-isoaspartate O-methyltransferase.